A 297-amino-acid chain; its full sequence is MRPLSFRRRTAQARPDPAPSRLSYRVQRLLLTPLFHALIRVGLPAFVLAFGVGWLLQNQELRDELVAQTIALRTQIEQRPEFMVNAMSVSGASTELIEDIHEVVPIDFPVSSFALDLEAMDRIIGELDAVAEVDLSIQAAGILAIEIVERTPAVVWQTRQTLEILDAEGHRVGPIESRAAHAALPLVAGPGGNRAVAEALRLLEVAEELAPRIIGLQRMGERRWDVVLTEGQRILLPEREAELALARVIELDQAEDLFARDISVVDMRLPDRPTVRLNPDALDALWTIRGLTNDRIE.

Over 1–33 (MRPLSFRRRTAQARPDPAPSRLSYRVQRLLLTP) the chain is Cytoplasmic. The helical transmembrane segment at 34–54 (LFHALIRVGLPAFVLAFGVGW) threads the bilayer. Topologically, residues 55-297 (LLQNQELRDE…IRGLTNDRIE (243 aa)) are periplasmic. The region spanning 82 to 150 (FMVNAMSVSG…GILAIEIVER (69 aa)) is the POTRA domain.

The protein belongs to the FtsQ/DivIB family. FtsQ subfamily.

Its subcellular location is the cell inner membrane. Essential cell division protein. This is Cell division protein FtsQ from Dinoroseobacter shibae (strain DSM 16493 / NCIMB 14021 / DFL 12).